The primary structure comprises 309 residues: Aspartate carbamoyltransferase catalytic subunit (309 aa).

Residues Arg-58 and Thr-59 each coordinate carbamoyl phosphate. Lys-86 provides a ligand contact to L-aspartate. Residues Arg-108, His-136, and Gln-139 each contribute to the carbamoyl phosphate site. Positions 169 and 223 each coordinate L-aspartate. Positions 264 and 265 each coordinate carbamoyl phosphate.

Belongs to the aspartate/ornithine carbamoyltransferase superfamily. ATCase family. As to quaternary structure, heterododecamer (2C3:3R2) of six catalytic PyrB chains organized as two trimers (C3), and six regulatory PyrI chains organized as three dimers (R2).

The enzyme catalyses carbamoyl phosphate + L-aspartate = N-carbamoyl-L-aspartate + phosphate + H(+). The protein operates within pyrimidine metabolism; UMP biosynthesis via de novo pathway; (S)-dihydroorotate from bicarbonate: step 2/3. In terms of biological role, catalyzes the condensation of carbamoyl phosphate and aspartate to form carbamoyl aspartate and inorganic phosphate, the committed step in the de novo pyrimidine nucleotide biosynthesis pathway. The polypeptide is Aspartate carbamoyltransferase catalytic subunit (Pelotomaculum thermopropionicum (strain DSM 13744 / JCM 10971 / SI)).